A 195-amino-acid chain; its full sequence is Probable cobalt-precorrin-6B C(15)-methyltransferase (decarboxylating) (195 aa).

Residues T24, 48–52, D72, and A101 contribute to the S-adenosyl-L-methionine site; that span reads GCGTG.

This sequence belongs to the methyltransferase superfamily. Archaeal-type CbiT family.

The enzyme catalyses Co-precorrin-6B + S-adenosyl-L-methionine = Co-precorrin-7 + S-adenosyl-L-homocysteine + CO2. It functions in the pathway cofactor biosynthesis; adenosylcobalamin biosynthesis; cob(II)yrinate a,c-diamide from sirohydrochlorin (anaerobic route): step 8/10. Its function is as follows. Catalyzes the methylation of C-15 in cobalt-precorrin-6B followed by the decarboxylation of C-12 to form cobalt-precorrin-7. The chain is Probable cobalt-precorrin-6B C(15)-methyltransferase (decarboxylating) from Pyrobaculum calidifontis (strain DSM 21063 / JCM 11548 / VA1).